The sequence spans 97 residues: UPF0250 protein RSc0326 (97 aa).

This sequence belongs to the UPF0250 family.

This is UPF0250 protein RSc0326 from Ralstonia nicotianae (strain ATCC BAA-1114 / GMI1000) (Ralstonia solanacearum).